Here is a 776-residue protein sequence, read N- to C-terminus: Protein SEY1 (776 aa).

The Cytoplasmic segment spans residues 1-681; it reads MADRPAIQLI…KRSIITTRTH (681 aa). Positions 34-263 constitute a GB1/RHD3-type G domain; the sequence is GLDYHVISVF…TENYYFKPQY (230 aa). Residue 44–51 participates in GTP binding; sequence GSQSSGKS. A helical transmembrane segment spans residues 682–702; that stretch reads IPPWIYVLLAVLGWNEFVAVI. Topologically, residues 703–705 are lumenal; that stretch reads RNP. The chain crosses the membrane as a helical span at residues 706-726; the sequence is LFVTLTLILGATFFVIHKFGL. Over 727-776 the chain is Cytoplasmic; sequence WGPVVNVVQSAVGETRTAIKDKLRQFVVEDHEVKESFEMKDFSKNEQKEK.

This sequence belongs to the TRAFAC class dynamin-like GTPase superfamily. GB1/RHD3 GTPase family. RHD3 subfamily. As to quaternary structure, interacts with RTN1 and YOP1; GTP binding is not required for these interactions.

The protein localises to the endoplasmic reticulum membrane. Functionally, cooperates with the reticulon proteins RTN1 and RTN2 and the tubule-shaping DP1 family protein YOP1 to generate and maintain the structure of the tubular endoplasmic reticulum network. Has GTPase activity, which is required for its function in ER organization. This is Protein SEY1 from Saccharomyces cerevisiae (strain ATCC 204508 / S288c) (Baker's yeast).